The following is a 161-amino-acid chain: MPSFDVVSEVDKHELTNAVDQANRELDTRFDFKGVQAKFELEDGKVINQSAPSDFQIKQMTDILRARLLARGIDIRCLEFGEVETNLAGARQKVTVKQGIEQKQAKQLVAKLKEAKLKVEAQINGDKLRVTGKKRDDLQDAIALLKKADFELPLQFDNFRD.

The protein belongs to the YajQ family.

Functionally, nucleotide-binding protein. This Xanthomonas euvesicatoria pv. vesicatoria (strain 85-10) (Xanthomonas campestris pv. vesicatoria) protein is Nucleotide-binding protein XCV3791.